The following is a 426-amino-acid chain: Isocitrate dehydrogenase [NADP] (426 aa).

S123, N125, R129, R139, and R162 together coordinate D-threo-isocitrate. Residue D312 participates in Mg(2+) binding. NADP(+)-binding positions include 344-350 (HGTAWDI), N357, and K404.

The protein belongs to the isocitrate and isopropylmalate dehydrogenases family. As to quaternary structure, homodimer. Mg(2+) is required as a cofactor. Mn(2+) serves as cofactor.

It carries out the reaction D-threo-isocitrate + NADP(+) = 2-oxoglutarate + CO2 + NADPH. Functionally, catalyzes the oxidative decarboxylation of isocitrate to 2-oxoglutarate and carbon dioxide with the concomitant reduction of NADP(+). The protein is Isocitrate dehydrogenase [NADP] (icd) of Aquifex aeolicus (strain VF5).